A 459-amino-acid polypeptide reads, in one-letter code: MDTIAAISTPMGEGAIAIVRLSGPEAIQIADKIYKGPKGKTLSSVESHTIHYGHIVDRPSDRVVEEVMVSVLKAPRTFTREDVIEINCHGGIVTVNQVLQLALREGARLAEPGEFTKRAFLNGRIDLSQAEAVMDLIRAKTDRAMNVAMNQMEGRLSALVRRLRSEILETLAHVEVNIDYPEYDDVEEMTHQILVEKATAVKKEIETLLRTSEQGKILREGLSTVIIGRPNVGKSSLLNSLVHEAKAIVTDIPGTTRDVIEEYVNVRGVPLRLVDTAGIRETEDIVERIGVERSRQVLKEADLILLVLNYSEELSEEDVKLFEAVEGMDVIVILNKTDLEPKIDTERVRELANGRPVVTTSLLKEEGINDLEEAIQSLFYTGAIESGDLTYVSNTRHITILQQAKRAIEDALSGIEQDVPIDMVQIDLTRCWELLGEIIGDSVHESLIDQLFSQFCLGK.

The (6S)-5-formyl-5,6,7,8-tetrahydrofolate site is built by Arg-20, Glu-85, and Arg-124. Residues 221 to 380 form the TrmE-type G domain; that stretch reads GLSTVIIGRP…LEEAIQSLFY (160 aa). Residue Asn-231 coordinates K(+). Residues 231 to 236, 250 to 256, and 275 to 278 contribute to the GTP site; these read NVGKSS, TDIPGTT, and DTAG. Ser-235 is a Mg(2+) binding site. The K(+) site is built by Thr-250, Ile-252, and Thr-255. Thr-256 is a Mg(2+) binding site. Lys-459 lines the (6S)-5-formyl-5,6,7,8-tetrahydrofolate pocket.

This sequence belongs to the TRAFAC class TrmE-Era-EngA-EngB-Septin-like GTPase superfamily. TrmE GTPase family. As to quaternary structure, homodimer. Heterotetramer of two MnmE and two MnmG subunits. K(+) is required as a cofactor.

Its subcellular location is the cytoplasm. Exhibits a very high intrinsic GTPase hydrolysis rate. Involved in the addition of a carboxymethylaminomethyl (cmnm) group at the wobble position (U34) of certain tRNAs, forming tRNA-cmnm(5)s(2)U34. The sequence is that of tRNA modification GTPase MnmE from Bacillus subtilis (strain 168).